We begin with the raw amino-acid sequence, 105 residues long: Insulin (105 aa).

The first 24 residues, 1–24 (MALWTRLRPLLALLALWPPPPARA), serve as a signal peptide directing secretion. 3 cysteine pairs are disulfide-bonded: Cys31–Cys91, Cys43–Cys104, and Cys90–Cys95. A propeptide spans 57-82 (EVEGPQVGALELAGGPGAGGLEGPPQ) (c peptide).

It belongs to the insulin family. In terms of assembly, heterodimer of a B chain and an A chain linked by two disulfide bonds.

It is found in the secreted. Functionally, insulin decreases blood glucose concentration. It increases cell permeability to monosaccharides, amino acids and fatty acids. It accelerates glycolysis, the pentose phosphate cycle, and glycogen synthesis in liver. The polypeptide is Insulin (INS) (Bos taurus (Bovine)).